The primary structure comprises 154 residues: 6,7-dimethyl-8-ribityllumazine synthase (154 aa).

Residues Phe21, 55–57 (AFE), and 79–81 (CVI) contribute to the 5-amino-6-(D-ribitylamino)uracil site. 84-85 (AT) is a binding site for (2S)-2-hydroxy-3-oxobutyl phosphate. His87 serves as the catalytic Proton donor. Phe112 is a 5-amino-6-(D-ribitylamino)uracil binding site. Arg126 is a binding site for (2S)-2-hydroxy-3-oxobutyl phosphate.

Belongs to the DMRL synthase family. As to quaternary structure, forms an icosahedral capsid composed of 60 subunits, arranged as a dodecamer of pentamers.

The enzyme catalyses (2S)-2-hydroxy-3-oxobutyl phosphate + 5-amino-6-(D-ribitylamino)uracil = 6,7-dimethyl-8-(1-D-ribityl)lumazine + phosphate + 2 H2O + H(+). The protein operates within cofactor biosynthesis; riboflavin biosynthesis; riboflavin from 2-hydroxy-3-oxobutyl phosphate and 5-amino-6-(D-ribitylamino)uracil: step 1/2. Catalyzes the formation of 6,7-dimethyl-8-ribityllumazine by condensation of 5-amino-6-(D-ribitylamino)uracil with 3,4-dihydroxy-2-butanone 4-phosphate. This is the penultimate step in the biosynthesis of riboflavin. The sequence is that of 6,7-dimethyl-8-ribityllumazine synthase from Staphylococcus aureus (strain Newman).